The following is an 874-amino-acid chain: Tyrosine-protein kinase receptor TYRO3 (874 aa).

The first 20 residues, 1–20 (MEVSLCILLFLLHFNEGIHG), serve as a signal peptide directing secretion. Ig-like C2-type domains follow at residues 21–106 (VRFT…IISS) and 117–198 (PHFG…GTVH). Over 21 to 411 (VRFTQKPFHQ…QAQTQRGHMW (391 aa)) the chain is Extracellular. Cysteine 42 and cysteine 95 form a disulfide bridge. Residues asparagine 135, asparagine 174, asparagine 217, asparagine 270, asparagine 305, and asparagine 373 are each glycosylated (N-linked (GlcNAc...) asparagine). A disulfide bridge connects residues cysteine 138 and cysteine 181. Fibronectin type-III domains are found at residues 202-297 (RPDS…TPQA) and 299-403 (PSAA…AMQA). Residues 412-432 (VGLLFGLLVATMVGLLLIVLI) form a helical membrane-spanning segment. Topologically, residues 433–874 (RNRGKETQFG…EEEEDVIINV (442 aa)) are cytoplasmic. Residues 497–768 (LTLGRMLGKG…QHLIDQLELL (272 aa)) form the Protein kinase domain. Residues 503–511 (LGKGEFGSV) and lysine 529 contribute to the ATP site. The Proton acceptor role is filled by aspartate 634. Tyrosine 665 bears the Phosphotyrosine; by autocatalysis mark.

The protein belongs to the protein kinase superfamily. Tyr protein kinase family. AXL/UFO subfamily.

It localises to the cell membrane. The enzyme catalyses L-tyrosyl-[protein] + ATP = O-phospho-L-tyrosyl-[protein] + ADP + H(+). Its function is as follows. May be involved in cell adhesion processes, particularly in the central nervous system. The chain is Tyrosine-protein kinase receptor TYRO3 (tyro3) from Danio rerio (Zebrafish).